The chain runs to 321 residues: Glycerol-3-phosphate phosphatase (321 aa).

Residue Asp34 is the Nucleophile of the active site. 3 residues coordinate Mg(2+): Asp34, Asp36, and Asp260. The active-site Proton donor is the Asp36.

This sequence belongs to the HAD-like hydrolase superfamily. CbbY/CbbZ/Gph/YieH family. In terms of assembly, homodimer. Mg(2+) serves as cofactor. Expression was confirmed in liver, adipose tissue, testis and pancreatic islet.

The enzyme catalyses O-phospho-L-tyrosyl-[protein] + H2O = L-tyrosyl-[protein] + phosphate. It carries out the reaction sn-glycerol 1-phosphate + H2O = glycerol + phosphate. The catalysed reaction is sn-glycerol 3-phosphate + H2O = glycerol + phosphate. Glycerol-3-phosphate phosphatase hydrolyzing glycerol-3-phosphate into glycerol. Thereby, regulates the cellular levels of glycerol-3-phosphate a metabolic intermediate of glucose, lipid and energy metabolism. Was also shown to have a 2-phosphoglycolate phosphatase activity and a tyrosine-protein phosphatase activity. However, their physiological relevance is unclear. In vitro, also has a phosphatase activity toward ADP, ATP, GDP and GTP. The polypeptide is Glycerol-3-phosphate phosphatase (Rattus norvegicus (Rat)).